The chain runs to 98 residues: DNA-binding protein Fis (98 aa).

The H-T-H motif DNA-binding region spans 74 to 93 (QTRAATMLGINRGTLRKKLK).

Belongs to the transcriptional regulatory Fis family. As to quaternary structure, homodimer.

In terms of biological role, activates ribosomal RNA transcription. Plays a direct role in upstream activation of rRNA promoters. The protein is DNA-binding protein Fis of Mannheimia haemolytica (Pasteurella haemolytica).